The following is a 920-amino-acid chain: Sensor histidine kinase SsrA (920 aa).

Over 1–19 (MNLLNLKNTLQTSLVIRLT) the chain is Cytoplasmic. A helical membrane pass occupies residues 20-40 (FLFLLTTIIIWLLSVLTAAYI). Residues 41 to 291 (SMVQKRQHII…YGNLHNRILK (251 aa)) are Periplasmic-facing. Residues 292 to 312 (IILQQIPFTLTALVLMTSAFC) traverse the membrane as a helical segment. The Cytoplasmic segment spans residues 313–920 (WLLHRSLAKP…RMIFKNYTIT (608 aa)). In terms of domain architecture, HAMP spans 317-369 (RSLAKPLWRFVDVINKTATAPLSTRLPAQRLDELDSIAGAFNQLLDTLQVQYD). The stretch at 354-395 (AGAFNQLLDTLQVQYDNLENKVAERTQALNEAKKRAERANKR) forms a coiled coil. The Histidine kinase domain occupies 402–614 (VISHELRTPM…CVSLVLPLQE (213 aa)). The ATP site is built by H405 and D549. H405 is subject to Phosphohistidine; by autocatalysis. The 119-residue stretch at 690–808 (QILLVDDADI…TLARYISIAA (119 aa)) folds into the Response regulatory domain. 4-aspartylphosphate is present on D739.

Autophosphorylated.

Its subcellular location is the cell inner membrane. The enzyme catalyses ATP + protein L-histidine = ADP + protein N-phospho-L-histidine.. Functionally, member of the two-component regulatory system SsrA/SsrB (SpiR/SsrB) that is required for intracellular proliferation and systemic dissemination within the host. When inside acidic Salmonella-containing vesicles (SCV) within host cells the SsrA sensor kinase autophosphorylates and the phosphoryl group is transferred to the response regulator SsrB; phosphorylated SsrB activates the expression of genes encoding virulence proteins, including pathogenicity island 2 (SPI2) and other horizontally acquired genes, and antagonizes the action of transcriptional repressor hns (H-NS). The polypeptide is Sensor histidine kinase SsrA (Salmonella typhimurium (strain LT2 / SGSC1412 / ATCC 700720)).